A 436-amino-acid chain; its full sequence is MKGFMIAAPASGSGKTTVTLGLLRALKRRGEALAPVKAGPDYIDPAYHKAASGVDCFNLDPWAMRPELISALSSRMTESGARLLVAEGMMGLFDGAMDGKGSSADLARLLDLPVVLVVDCARQSHSIAALVWGFSQFRKDVLIAGIILNRVGSSRHEAMLRGALEPLRIPVLGALPRDTALSLPERHLGLVQAGEHSDLESFLEHAADTMETHIDLDALQTIWSRPKRFDAMANVPRLKPLGNHIAVARDDAFAFAYAHLFEGWRRRGVEISFFSPLGDESPRQDADAIYLPGGYPELHAGRLAQAGRFQAGIREAAARGVTVYGECGGYMVLGESLQDAEGVAHPMLGLLQLETSFAKRKLHLGYRVLEPLEGSPWTEPLKAHEFHYASIVREGKADRLFRVRDAVGDDVGEAGLRVGSVSGSFMHVIDFCGEKA.

The 192-residue stretch at 244-435 folds into the GATase cobBQ-type domain; that stretch reads HIAVARDDAF…MHVIDFCGEK (192 aa). C327 (nucleophile) is an active-site residue.

It belongs to the CobB/CbiA family. The cofactor is Mg(2+).

It carries out the reaction hydrogenobyrinate + 2 L-glutamine + 2 ATP + 2 H2O = hydrogenobyrinate a,c-diamide + 2 L-glutamate + 2 ADP + 2 phosphate + 2 H(+). The protein operates within cofactor biosynthesis; adenosylcobalamin biosynthesis; cob(II)yrinate a,c-diamide from precorrin-2 (aerobic route): step 9/10. Functionally, catalyzes the ATP-dependent amidation of the two carboxylate groups at positions a and c of hydrogenobyrinate, using either L-glutamine or ammonia as the nitrogen source. This Brucella anthropi (strain ATCC 49188 / DSM 6882 / CCUG 24695 / JCM 21032 / LMG 3331 / NBRC 15819 / NCTC 12168 / Alc 37) (Ochrobactrum anthropi) protein is Hydrogenobyrinate a,c-diamide synthase.